The following is a 433-amino-acid chain: Adenylosuccinate synthetase (433 aa).

GTP is bound by residues 13 to 19 and 41 to 43; these read GDEGKGK and GHT. Catalysis depends on D14, which acts as the Proton acceptor. The Mg(2+) site is built by D14 and G41. Residues 14–17, 39–42, T130, R144, Q225, T240, and R304 contribute to the IMP site; these read DEGK and NAGH. Residue H42 is the Proton donor of the active site. 300 to 306 contacts substrate; the sequence is STTGRKR. GTP contacts are provided by residues R306, 332–334, and 414–416; these read KLD and STG.

It belongs to the adenylosuccinate synthetase family. Homodimer. Mg(2+) serves as cofactor.

It localises to the cytoplasm. It carries out the reaction IMP + L-aspartate + GTP = N(6)-(1,2-dicarboxyethyl)-AMP + GDP + phosphate + 2 H(+). It participates in purine metabolism; AMP biosynthesis via de novo pathway; AMP from IMP: step 1/2. Its function is as follows. Plays an important role in the de novo pathway of purine nucleotide biosynthesis. Catalyzes the first committed step in the biosynthesis of AMP from IMP. The chain is Adenylosuccinate synthetase from Buchnera aphidicola subsp. Acyrthosiphon pisum (strain APS) (Acyrthosiphon pisum symbiotic bacterium).